The sequence spans 207 residues: Small ribosomal subunit protein uS4A (207 aa).

Residues 98–158 form the S4 RNA-binding domain; the sequence is TRLDNVAYRL…EKSKSSAKFK (61 aa).

Belongs to the universal ribosomal protein uS4 family. As to quaternary structure, part of the 30S ribosomal subunit. Contacts protein S5. The interaction surface between S4 and S5 is involved in control of translational fidelity.

One of the primary rRNA binding proteins, it binds directly to 16S rRNA where it nucleates assembly of the body of the 30S subunit. Its function is as follows. With S5 and S12 plays an important role in translational accuracy. This chain is Small ribosomal subunit protein uS4A, found in Alkaliphilus oremlandii (strain OhILAs) (Clostridium oremlandii (strain OhILAs)).